Consider the following 93-residue polypeptide: MASEIVVDHREKALALLKRDADKILKLIQVQMDNLTMPQCPLYEEVLDTQMFGLSREIDFAVRLGLVDEEEGKELLYRLERELSALHDAFTKK.

Belongs to the UPF0358 family.

In Bacillus licheniformis (strain ATCC 14580 / DSM 13 / JCM 2505 / CCUG 7422 / NBRC 12200 / NCIMB 9375 / NCTC 10341 / NRRL NRS-1264 / Gibson 46), this protein is UPF0358 protein BLi01701/BL02974.